Here is a 685-residue protein sequence, read N- to C-terminus: Kinesin-like protein KIP2 (685 aa).

2 disordered regions span residues 11–46 and 63–101; these read EHVGSAGASLPQTPGSRSFALGAHPGPQKRIGGPAQ and SRPSSPYMQASPLLKGSESGGSAGSPQSPDAPSSASGAS. The span at 86–101 shows a compositional bias: low complexity; sequence GSPQSPDAPSSASGAS. Residues 113–446 enclose the Kinesin motor domain; it reads NVSVAIRIKP…VRFASRAKNI (334 aa). 185–192 lines the ATP pocket; that stretch reads GMTGSGKT. 2 coiled-coil regions span residues 464–486 and 520–663; these read IIQNLRKQLDEQHETIVMLRRSA and LEVE…SALS. Residues 485–510 are disordered; it reads SAAAPSGNGSTSPLDSPGVGGTSLSE.

Belongs to the TRAFAC class myosin-kinesin ATPase superfamily. Kinesin family.

The protein resides in the cytoplasm. Its subcellular location is the cytoskeleton. Functionally, required for assembly of the mitotic spindle. The chain is Kinesin-like protein KIP2 (KIP2) from Eremothecium gossypii (strain ATCC 10895 / CBS 109.51 / FGSC 9923 / NRRL Y-1056) (Yeast).